We begin with the raw amino-acid sequence, 663 residues long: Protein THEMIS2 (663 aa).

CABIT stretches follow at residues 2 to 237 (EPVP…TASS) and 238 to 515 (QHIH…EAEG). The segment at 545–663 (ASESQAPPPR…DMDDHDYEEI (119 aa)) is disordered. A compositionally biased stretch (polar residues) spans 559–577 (QGINKKQQNIQSCKESSVK). Thr-596 is subject to Phosphothreonine. A compositionally biased stretch (polar residues) spans 621-641 (NPQTQNSVLSMKPKTSSSLGK). A compositionally biased stretch (acidic residues) spans 653–663 (PDMDDHDYEEI). Phosphotyrosine is present on Tyr-660.

Belongs to the themis family. Interacts with VAV1. Interacts with LAT. Interacts constitutively with GRB2, LYN and PLCG2; these interactions increase the activation of PLCG2 and its downstream pathways following B cell receptor stimulation. In terms of processing, phosphorylation at Tyr-660 is induced by LPS. Phosphorylated by Src kinases (Lck or Fyn) following BCR engagement. As to expression, expressed in both developing and mature B-cells with high expression in immature, follicular and B1 B cells. Also expressed in macrophages and dendritic cells. Down-regulated in splenocytes of mice developing arthritis in a collagen-induced model, not in those of mice failing to develop the disease. Transiently down-regulated in splenocytes of mice infected with influenza virus.

Its subcellular location is the nucleus. It localises to the cytoplasm. Its function is as follows. May constitute a control point in macrophage inflammatory response, promoting LPS-induced TLR4-mediated TNF production. Determines the threshold for activation of B cells by low-affinity and low-avidity ligands via PLCG2 activation and its downstream pathways. The polypeptide is Protein THEMIS2 (Mus musculus (Mouse)).